We begin with the raw amino-acid sequence, 947 residues long: Nonribosomal peptide synthetase ucdA (947 aa).

An adenylation (A) domain region spans residues 25–413; that stretch reads YSPHANAGYC…AGPVVFKEYF (389 aa). Residues 585 to 665 enclose the Carrier domain; it reads APENEFERDL…DLGTALRKLQ (81 aa). An O-(pantetheine 4'-phosphoryl)serine modification is found at serine 623. The interval 684 to 934 is thioesterase (TE) domain; the sequence is PLWLVHPGVG…MLSPEHVFDF (251 aa).

The protein belongs to the NRP synthetase family.

It catalyses the reaction 2 3-(4-hydroxyphenyl)pyruvate + 2 ATP = atromentin + 2 AMP + 2 diphosphate + H(+). The protein operates within secondary metabolite biosynthesis. In terms of biological role, nonribosomal peptide synthetase that mediates the biosynthesis of usterphenyllins and uscandidusins, p-terphenyl derivatives. Within the pathway, ucdA condenses two 4-hydroxyphenylpyruvate (HPPA) units to produce atromentin. UcdA first activates HPPA through its A domain to AMP-HPPA. The HPPA unit is then loaded to the T domain and eventually transferred to the TE domain. Another HPPA unit is then loaded onto the T domain. The TE domain then catalyzes the condensation of the two HPPA units and the release of atromentin via cyclization. The pathway begin with the biosynthesis of 4-hydroxyphenylpyruvate (HPPA) from L-tyrosine, possibly by the aminotransferase ucdG. The nonribosomal peptide synthetase ucdA then condenses two HPPA units to produce atromentin. The key step in this pathway is the reduction and dehydration of atromentin to form a terphenyl triol intermediate, performed by the NAD-dependent dehydrogenase ucdB. Further O-methylation by the methyltransferase ucdC forms terphenyllin carrying two methoxy moieties at C-9 and C-12, and subsequent dihydroxylation at C-3 of ring A and C-15 of ring C by the flavin-dependent oxygenase ucdD leads to 3,15-dihydroxyterphenyllin. Prenylation by ucdE at position C-5 of ring A forms usterphenyllin B, and is followed by a second prenylation at position C-14 of ring C to form usterphenyllin A. The following furan ring formation that leads to uscandidusins A and B was proven to be an unexpected spontaneous non-enzymatic reaction. This Aspergillus ustus protein is Nonribosomal peptide synthetase ucdA.